A 274-amino-acid polypeptide reads, in one-letter code: NH(3)-dependent NAD(+) synthetase (274 aa).

46–53 is a binding site for ATP; it reads GISGGQDS. A Mg(2+)-binding site is contributed by Asp-52. Arg-140 provides a ligand contact to deamido-NAD(+). Thr-160 is a binding site for ATP. Position 165 (Glu-165) interacts with Mg(2+). Lys-173 and Asp-180 together coordinate deamido-NAD(+). The ATP site is built by Lys-189 and Thr-211. 260–261 lines the deamido-NAD(+) pocket; sequence HK.

It belongs to the NAD synthetase family. As to quaternary structure, homodimer.

It carries out the reaction deamido-NAD(+) + NH4(+) + ATP = AMP + diphosphate + NAD(+) + H(+). The protein operates within cofactor biosynthesis; NAD(+) biosynthesis; NAD(+) from deamido-NAD(+) (ammonia route): step 1/1. Catalyzes the ATP-dependent amidation of deamido-NAD to form NAD. Uses ammonia as a nitrogen source. In Listeria monocytogenes serotype 4b (strain CLIP80459), this protein is NH(3)-dependent NAD(+) synthetase.